A 586-amino-acid chain; its full sequence is Alanine racemase ungC (586 aa).

A disordered region spans residues 187–206 (RVGALPAAASTASPMGSSLP). Over residues 196-206 (STASPMGSSLP) the composition is skewed to polar residues.

This sequence belongs to the trans-sulfuration enzymes family. Pyridoxal 5'-phosphate serves as cofactor.

It carries out the reaction L-alanine = D-alanine. It participates in secondary metabolite biosynthesis. Alanine racemase; part of the gene cluster that mediates the biosynthesis of the unguisins, gamma-aminobutyric acid (GABA)-containing fungal cyclic heptapeptides with the amino acid sequence cyclo-(D-Ala1-D-Val2-L-Phe3-D-Val4-D-Ala5-D-Trp6-GABA7) for unguisin A and cyclo-(D-Ala1-D-Val2-L-Leu3-D-Val4-D-Ala5-D-Trp6-GABA7) for unguisin B. Within the pathway, the alanine racemase ungC catalyzes the interconversion of L-alanine and D-alanine, providing the D-alanine which is accepted by the first adenylation domain of the nonribosomal peptide synthetase (NRPS) ungA. UngA is the main enzyme within the cluster which condenses the 7 residues using its respective 7 modules. The terminal condensation domain (Ct) is involved in cyclization with D-alanine and thereby releasing of unguisins A and B. Finally, the hydrolase ungD catalyzes the hydrolysis between the D-tryptophan and GABA residues of unguisins A and B to produce the corresponding linear peptides. The sequence is that of Alanine racemase ungC from Aspergillus violaceofuscus (strain CBS 115571).